The chain runs to 373 residues: Chaperone protein DnaJ (373 aa).

The J domain maps to 5 to 69; the sequence is DYYEVLGVNK…NKRANYDQFG (65 aa). The segment at 130–212 adopts a CR-type zinc-finger fold; the sequence is GTKKEISIKK…CKGKGTENKT (83 aa). Residues Cys143, Cys146, Cys160, Cys163, Cys186, Cys189, Cys200, and Cys203 each contribute to the Zn(2+) site. CXXCXGXG motif repeat units follow at residues 143-150, 160-167, 186-193, and 200-207; these read CHTCNGDG, CSYCNGAG, CPKCEGSG, and CPTCKGKG.

It belongs to the DnaJ family. In terms of assembly, homodimer. Zn(2+) serves as cofactor.

The protein resides in the cytoplasm. Its function is as follows. Participates actively in the response to hyperosmotic and heat shock by preventing the aggregation of stress-denatured proteins and by disaggregating proteins, also in an autonomous, DnaK-independent fashion. Unfolded proteins bind initially to DnaJ; upon interaction with the DnaJ-bound protein, DnaK hydrolyzes its bound ATP, resulting in the formation of a stable complex. GrpE releases ADP from DnaK; ATP binding to DnaK triggers the release of the substrate protein, thus completing the reaction cycle. Several rounds of ATP-dependent interactions between DnaJ, DnaK and GrpE are required for fully efficient folding. Also involved, together with DnaK and GrpE, in the DNA replication of plasmids through activation of initiation proteins. The sequence is that of Chaperone protein DnaJ from Staphylococcus epidermidis (strain ATCC 12228 / FDA PCI 1200).